We begin with the raw amino-acid sequence, 435 residues long: GTPase Der (435 aa).

2 EngA-type G domains span residues 3 to 168 (PTVA…PEDD) and 176 to 351 (VKLT…QNRR). Residues 9–16 (GRPNVGKS), 56–60 (DTGGY), 120–123 (NKVD), 182–189 (GRPNVGKS), 229–233 (DTAGL), and 294–297 (NKWD) each bind GTP. A KH-like domain is found at 352–435 (MKIDTSRLNN…TPIELKFRRK (84 aa)).

Belongs to the TRAFAC class TrmE-Era-EngA-EngB-Septin-like GTPase superfamily. EngA (Der) GTPase family. As to quaternary structure, associates with the 50S ribosomal subunit.

In terms of biological role, GTPase that plays an essential role in the late steps of ribosome biogenesis. This is GTPase Der from Chloroherpeton thalassium (strain ATCC 35110 / GB-78).